A 39-amino-acid chain; its full sequence is Cytochrome b559 subunit beta (39 aa).

The helical transmembrane segment at 14–30 (WLAIHGLAVPTVFFLGS) threads the bilayer. H18 lines the heme pocket.

The protein belongs to the PsbE/PsbF family. As to quaternary structure, heterodimer of an alpha subunit and a beta subunit. PSII is composed of 1 copy each of membrane proteins PsbA, PsbB, PsbC, PsbD, PsbE, PsbF, PsbH, PsbI, PsbJ, PsbK, PsbL, PsbM, PsbT, PsbX, PsbY, PsbZ, Psb30/Ycf12, at least 3 peripheral proteins of the oxygen-evolving complex and a large number of cofactors. It forms dimeric complexes. Heme b is required as a cofactor.

Its subcellular location is the plastid. It localises to the chloroplast thylakoid membrane. In terms of biological role, this b-type cytochrome is tightly associated with the reaction center of photosystem II (PSII). PSII is a light-driven water:plastoquinone oxidoreductase that uses light energy to abstract electrons from H(2)O, generating O(2) and a proton gradient subsequently used for ATP formation. It consists of a core antenna complex that captures photons, and an electron transfer chain that converts photonic excitation into a charge separation. The polypeptide is Cytochrome b559 subunit beta (Ephedra sinica (Chinese ephedra)).